The sequence spans 956 residues: Phosphatidylinositol 4-kinase PIK1a (956 aa).

In terms of domain architecture, PIK helical spans 1-120 (MPVAPHELRD…QTVRKFINKL (120 aa)). The tract at residues 545-573 (SRDWAKSTPGSPVARSSQEDEKFYGNVSS) is disordered. The region spanning 658–939 (EDWNEKKHRI…YLIEKSVGSM (282 aa)) is the PI3K/PI4K catalytic domain. Positions 664-670 (KHRIRKS) are G-loop. The segment at 805–813 (QIKDRHNGN) is catalytic loop. The tract at residues 824 to 848 (HIDFGFLLSNSPGSVGFEAAPFKLT) is activation loop.

This sequence belongs to the PI3/PI4-kinase family. Type III PI4K subfamily.

It is found in the nucleus. The catalysed reaction is a 1,2-diacyl-sn-glycero-3-phospho-(1D-myo-inositol) + ATP = a 1,2-diacyl-sn-glycero-3-phospho-(1D-myo-inositol 4-phosphate) + ADP + H(+). Acts on phosphatidylinositol (PI) in the first committed step in the production of the second messenger inositol 1,4,5,-trisphosphate. This chain is Phosphatidylinositol 4-kinase PIK1a (PIKA), found in Candida albicans (strain SC5314 / ATCC MYA-2876) (Yeast).